We begin with the raw amino-acid sequence, 332 residues long: Putative pumilio homolog 17 (332 aa).

Residues 1-302 enclose the PUM-HD domain; that stretch reads MTNINRLSMS…ILTADLFYSL (302 aa). Residues 82-117 form a Pumilio 1 repeat; the sequence is SDSDYFMVITRNKNGSKSLQKLMRMSDDMDVFFFVA. The Pumilio 2; degenerate repeat unit spans residues 118–152; sequence IMRLFIHVMIDKYASYVAIQGMRIFKQDKRELMYD. 4 Pumilio repeats span residues 153-188, 189-225, 226-264, and 265-300; these read HILR…DELM, DIVS…NIAD, KLCG…DLLA, and CKTE…DLFY.

The protein localises to the cytoplasm. Its function is as follows. Sequence-specific RNA-binding protein that regulates translation and mRNA stability by binding the 3'-UTR of target mRNAs. This chain is Putative pumilio homolog 17 (APUM17), found in Arabidopsis thaliana (Mouse-ear cress).